The primary structure comprises 165 residues: S-(2-succino)cysteine N-acetyltransferase (165 aa).

The N-acetyltransferase domain occupies 3–162 (PRYRLAVERD…ITVYMKKQLR (160 aa)).

This sequence belongs to the acetyltransferase family.

The catalysed reaction is S-(2-succino)-L-cysteine + acetyl-CoA = N-acetyl-S-(2-succino)-L-cysteine + CoA + H(+). It functions in the pathway amino-acid biosynthesis; L-cysteine biosynthesis. Functionally, catalyzes the N-acetylation of S-(2-succino)cysteine. Is involved in a S-(2-succino)cysteine (2SC) degradation pathway that allows B.subtilis to grow on 2SC as a sole sulfur source, via its metabolization to cysteine. Moreover, 2SC is a toxic compound in B.subtilis at high exogenous concentrations, and this enzyme relieves 2SC toxicity via N-acetylation. This Bacillus subtilis (strain 168) protein is S-(2-succino)cysteine N-acetyltransferase.